Here is a 227-residue protein sequence, read N- to C-terminus: PKHD-type hydroxylase CC_0027 (227 aa).

A Fe2OG dioxygenase domain is found at 78–178 (TILSPMFNRY…RTASFFWIQS (101 aa)). Fe cation-binding residues include His96, Asp98, and His159. Arg169 serves as a coordination point for 2-oxoglutarate.

Fe(2+) is required as a cofactor. L-ascorbate serves as cofactor.

The chain is PKHD-type hydroxylase CC_0027 from Caulobacter vibrioides (strain ATCC 19089 / CIP 103742 / CB 15) (Caulobacter crescentus).